A 311-amino-acid chain; its full sequence is Nod factor export ATP-binding protein I (311 aa).

The ABC transporter domain occupies 13-243 (IDLAGVSKSY…QIGCPVIEIY (231 aa)). Position 45–52 (45–52 (GPNGAGKS)) interacts with ATP.

The protein belongs to the ABC transporter superfamily. Lipooligosaccharide exporter (TC 3.A.1.102) family. In terms of assembly, the complex is composed of two ATP-binding proteins (NodI) and two transmembrane proteins (NodJ).

It is found in the cell inner membrane. Part of the ABC transporter complex NodIJ involved in the export of the nodulation factors (Nod factors), the bacterial signal molecules that induce symbiosis and subsequent nodulation induction. Nod factors are LCO (lipo-chitin oligosaccharide), a modified beta-1,4-linked N-acetylglucosamine oligosaccharide. This subunit is responsible for energy coupling to the transport system. The polypeptide is Nod factor export ATP-binding protein I (Rhizobium leguminosarum bv. viciae).